We begin with the raw amino-acid sequence, 118 residues long: cAMP-responsive element-binding protein-like 2 (118 aa).

The segment at 1–25 is disordered; it reads MDDSKVSGGKVKKPGKRGRKPAKID. Residues 10 to 21 are compositionally biased toward basic residues; the sequence is KVKKPGKRGRKP. Positions 23–86 constitute a bZIP domain; sequence KIDLKAKLER…AAMDQGKIPS (64 aa). The segment at 29-60 is basic motif; that stretch reads KLERSRQSARECRARKKLRYQYLEELVSSRER. The tract at residues 62-69 is leucine-zipper; it reads ICALREEL.

Belongs to the bZIP family. ATF subfamily.

It is found in the nucleus. In terms of biological role, probable regulator of creb1 transcriptional activity which is involved in adipose cells differentiation. May also play a regulatory role in the cell cycle. This is cAMP-responsive element-binding protein-like 2 (crebl2) from Xenopus tropicalis (Western clawed frog).